The primary structure comprises 429 residues: Probable M18 family aminopeptidase 2 (429 aa).

The Zn(2+) site is built by His-82, His-156, and His-401.

This sequence belongs to the peptidase M18 family. The cofactor is Zn(2+).

This Pseudomonas paraeruginosa (strain DSM 24068 / PA7) (Pseudomonas aeruginosa (strain PA7)) protein is Probable M18 family aminopeptidase 2.